The chain runs to 163 residues: uncharacterized protein (163 aa).

The interval 23 to 113 (DFPEEPPLWV…QVADGVHSQQ (91 aa)) is disordered. S102 is subject to Phosphoserine.

This is an uncharacterized protein from Mus musculus (Mouse).